Here is a 157-residue protein sequence, read N- to C-terminus: 2-C-methyl-D-erythritol 2,4-cyclodiphosphate synthase (157 aa).

A divalent metal cation-binding residues include aspartate 8 and histidine 10. 4-CDP-2-C-methyl-D-erythritol 2-phosphate is bound by residues 8 to 10 (DVH) and 34 to 35 (HS). Histidine 42 provides a ligand contact to a divalent metal cation. 4-CDP-2-C-methyl-D-erythritol 2-phosphate-binding positions include 56–58 (DIG), 61–65 (FPDTD), 100–106 (AQAPKMA), 132–135 (TTTE), phenylalanine 139, and arginine 142.

It belongs to the IspF family. As to quaternary structure, homotrimer. A divalent metal cation serves as cofactor.

It catalyses the reaction 4-CDP-2-C-methyl-D-erythritol 2-phosphate = 2-C-methyl-D-erythritol 2,4-cyclic diphosphate + CMP. It participates in isoprenoid biosynthesis; isopentenyl diphosphate biosynthesis via DXP pathway; isopentenyl diphosphate from 1-deoxy-D-xylulose 5-phosphate: step 4/6. In terms of biological role, involved in the biosynthesis of isopentenyl diphosphate (IPP) and dimethylallyl diphosphate (DMAPP), two major building blocks of isoprenoid compounds. Catalyzes the conversion of 4-diphosphocytidyl-2-C-methyl-D-erythritol 2-phosphate (CDP-ME2P) to 2-C-methyl-D-erythritol 2,4-cyclodiphosphate (ME-CPP) with a corresponding release of cytidine 5-monophosphate (CMP). The chain is 2-C-methyl-D-erythritol 2,4-cyclodiphosphate synthase from Pseudomonas syringae pv. syringae (strain B728a).